We begin with the raw amino-acid sequence, 259 residues long: Probable 6-phosphogluconolactonase 2 (259 aa).

The protein belongs to the glucosamine/galactosamine-6-phosphate isomerase family. 6-phosphogluconolactonase subfamily.

The protein localises to the cytoplasm. The protein resides in the cytosol. It carries out the reaction 6-phospho-D-glucono-1,5-lactone + H2O = 6-phospho-D-gluconate + H(+). The protein operates within carbohydrate degradation; pentose phosphate pathway; D-ribulose 5-phosphate from D-glucose 6-phosphate (oxidative stage): step 2/3. In terms of biological role, catalyzes the hydrolysis of 6-phosphogluconolactone to 6-phosphogluconate. The chain is Probable 6-phosphogluconolactonase 2 from Arabidopsis thaliana (Mouse-ear cress).